A 710-amino-acid polypeptide reads, in one-letter code: F-box/WD repeat-containing protein 7 (710 aa).

The interval 1–158 is disordered; that stretch reads MNQELLSVGS…CSSVSDLPAH (158 aa). The residue at position 26 (S26) is a Phosphoserine. The segment covering 46–55 has biased composition (basic and acidic residues); that stretch reads RHQEEEHTAR. Residues 69–84 show a composition bias toward polar residues; the sequence is QNDTQQGQVEENNNRF. Residues 87–132 show a composition bias toward acidic residues; that stretch reads VDEDSSGNQEEQEEDEEHAGEQEEEEEEEEEEEEMDQESDDFDPSD. Positions 133–142 are enriched in basic and acidic residues; that stretch reads DSSREDEHTH. Positions 143–158 are enriched in polar residues; it reads NSNVTNCSSVSDLPAH. Residue T208 is modified to Phosphothreonine. A Phosphoserine; by SGK1 modification is found at S230. Residues 281–327 form the F-box domain; sequence RDFISLLPKELALYVLSFLEPKDLLQAAQTCRYWRILAEDNLLWREK. 7 WD repeats span residues 381–421, 423–459, 462–501, 503–539, 542–581, 583–621, and 625–662; these read GHDD…RTLV, HTGG…CIHT, GHTS…HVLM, HVAA…CLHT, GHTN…HTLT, HQSL…QTLQ, and KHQS…FIRN.

As to quaternary structure, homodimer; homodimerization plays a role in substrate binding and/or ubiquitination and degradation. Component of the SCF(FBXW7) complex consisting of CUL1, RBX1, SKP1 and FBXW7. Interacts (via F-box domain) with SKP1. Interacts (via F-box domain) with pseudophosphatase STYX; the interaction is direct and prevents FBXW7 interaction with SKP1. Interacts with cyclin-E (CCNE1 or CCNE2). Interacts with PSEN1. Forms a trimeric complex with NOTCH1 and SGK1. Interacts with NOTCH1 intracellular domain/NICD and NOTCH4 intracellular domain/NICD. Interacts with NOTCH2 intracellular domain (N2ICD). Interacts with MYC (when phosphorylated). Interacts with USP28, counteracting ubiquitination of MYC. Interacts (when phosphorylated at Thr-208) with PIN1, disrupting FBXW7 dimerization and promoting FBXW7 autoubiquitination and degradation. Interacts with UBE2QL1. Interacts with FAM83D; promotes FBXW7 degradation. Interacts with MYCN; FBXW7 competes with AURKA for binding to unphosphorylated MYCN but not for binding to phosphorylated MYCN. Interacts with JUN. Found in a complex with JUN and PRR7. Interacts with JUN and PRR7; the interaction inhibits ubiquitination-mediated JUN degradation, promoting its phosphorylation and transcriptional activity. Interacts with NFE2L1. Interacts with NR1D1. Interacts with RICTOR; mediates RICTOR ubiquitination and degradation. Interacts with USP38, counteracting ubiquitination of MYC. Post-translationally, phosphorylation at Thr-208 promotes interaction with PIN1, leading to disrupt FBXW7 dimerization and promoting FBXW7 autoubiquitination and degradation. Phosphorylated by ATM at Ser-26 in response to DNA damage, promoting recruitment to DNA damage sites and 'Lys-63'-linked ubiquitination of phosphorylated XRCC4. In terms of processing, ubiquitinated: autoubiquitinates following phosphorylation at Thr-208 and subsequent interaction with PIN1. Ubiquitination leads to its proteasomal degradation. As to expression, widely expressed with highest levels in brain, heart and testis.

The protein localises to the nucleus. It is found in the nucleoplasm. The protein resides in the chromosome. It participates in protein modification; protein ubiquitination. Substrate recognition component of a SCF (SKP1-CUL1-F-box protein) E3 ubiquitin-protein ligase complex which mediates the ubiquitination and subsequent proteasomal degradation of target proteins. Recognizes and binds phosphorylated sites/phosphodegrons within target proteins and thereafter brings them to the SCF complex for ubiquitination. Mediates ubiquitination and subsequent degradation of CCNE1 and MYC. Identified substrates include cyclin-E (CCNE1 or CCNE2), DISC1, JUN, MYC, NOTCH1 released notch intracellular domain (NICD), NOTCH2, MCL1, MLST8, RICTOR and probably PSEN1. Acts as a negative regulator of JNK signaling by binding to phosphorylated JUN and promoting its ubiquitination and subsequent degradation. SCF(FBXW7) complex mediates the ubiquitination and subsequent degradation of NFE2L1. Involved in bone homeostasis and negative regulation of osteoclast differentiation. Regulates the amplitude of the cyclic expression of hepatic core clock genes and genes involved in lipid and glucose metabolism via ubiquitination and proteasomal degradation of their transcriptional repressor NR1D1; CDK1-dependent phosphorylation of NR1D1 is necessary for SCF(FBXW7)-mediated ubiquitination. Also able to promote 'Lys-63'-linked ubiquitination in response to DNA damage. The SCF(FBXW7) complex facilitates double-strand break repair following phosphorylation by ATM: phosphorylation promotes localization to sites of double-strand breaks and 'Lys-63'-linked ubiquitination of phosphorylated XRCC4, enhancing DNA non-homologous end joining. The chain is F-box/WD repeat-containing protein 7 from Mus musculus (Mouse).